The sequence spans 346 residues: F(420)H(2) dehydrogenase subunit H (346 aa).

The next 8 helical transmembrane spans lie at 18-38 (GIVG…AVWL), 91-111 (IFML…AVFI), 125-145 (ISVL…FMVA), 170-190 (PLGI…IVDI), 196-216 (LHWN…SLMA), 257-277 (ILGS…PGFI), 284-304 (GIIV…MVII), and 326-346 (LLPL…YLGA).

Belongs to the complex I subunit 1 family. As to quaternary structure, the FPO complex is composed of at least 13 different subunits. FpoA, FpoH, FpoJ, FpoK, FpoL, FpoM and FpoN proteins constitute the membrane sector of the complex.

The protein localises to the cell membrane. It catalyses the reaction methanophenazine + reduced coenzyme F420-(gamma-L-Glu)(n) = dihydromethanophenazine + oxidized coenzyme F420-(gamma-L-Glu)(n) + H(+). In terms of biological role, component of the F(420)H(2) dehydrogenase (FPO complex) which is part of the energy-conserving F(420)H(2):heterodisulfide oxidoreductase system. The membrane-bound electron transfer system of the complex plays an important role in the metabolism of methylotrophic methanogens when the organisms grow on methanol or methylamines. Catalyzes the oxidation of methanophenazine to dihydromethanophenazine. It shuttles electrons from F(420)H(2), via FAD and iron-sulfur (Fe-S) centers, to methanophenazine (an electron carrier in the membrane). It couples the redox reaction to proton translocation (for every two electrons transferred, two hydrogen ions are translocated across the cytoplasmic membrane), and thus conserves the redox energy in a proton gradient. The chain is F(420)H(2) dehydrogenase subunit H from Methanosarcina barkeri (strain Fusaro / DSM 804).